The following is a 355-amino-acid chain: Lipopolysaccharide heptosyltransferase 1 (355 aa).

Thr186, Thr187, Lys191, Glu221, Asp260, Thr261, Gly262, and His265 together coordinate ADP-L-glycero-beta-D-manno-heptose.

It belongs to the glycosyltransferase 9 family.

The protein resides in the cell inner membrane. It catalyses the reaction an alpha-Kdo-(2-&gt;4)-alpha-Kdo-(2-&gt;6)-lipid A + ADP-L-glycero-beta-D-manno-heptose = an L-alpha-D-Hep-(1-&gt;5)-[alpha-Kdo-(2-&gt;4)]-alpha-Kdo-(2-&gt;6)-lipid A + ADP + H(+). The protein operates within bacterial outer membrane biogenesis; LPS core biosynthesis. Its function is as follows. Glycosyltransferase involved in the biosynthesis of the core oligosaccharide region of lipopolysaccharide (LPS). Catalyzes the addition of the first heptose unit to one 3-deoxy-D-manno-octulosonic acid (Kdo) residue of the Kdo2-lipid A module. In Pseudomonas aeruginosa (strain ATCC 15692 / DSM 22644 / CIP 104116 / JCM 14847 / LMG 12228 / 1C / PRS 101 / PAO1), this protein is Lipopolysaccharide heptosyltransferase 1.